The chain runs to 430 residues: Probable sulfoacetate transporter SauU (430 aa).

10 consecutive transmembrane segments (helical) span residues 47–67, 83–103, 142–162, 165–185, 228–248, 263–283, 301–321, 327–347, 362–382, and 390–410; these read LGLV…LGGW, LIWG…ILVV, FARL…AAAG, EAFI…AFFF, WLVT…LTWL, LALF…LGGV, AVLF…TFTA, VILL…LWSL, MMNT…GYLI, and LPFM…LFIN.

It belongs to the major facilitator superfamily.

The protein localises to the cell membrane. Its function is as follows. May transport sulfoacetate into the cell. The sequence is that of Probable sulfoacetate transporter SauU (sauU) from Cupriavidus necator (strain ATCC 17699 / DSM 428 / KCTC 22496 / NCIMB 10442 / H16 / Stanier 337) (Ralstonia eutropha).